We begin with the raw amino-acid sequence, 179 residues long: Inosine/xanthosine triphosphatase (179 aa).

Glu71 provides a ligand contact to Mg(2+). 71 to 72 contacts substrate; it reads EA.

This sequence belongs to the YjjX NTPase family. Homodimer. It depends on Mg(2+) as a cofactor. The cofactor is Mn(2+).

The enzyme catalyses XTP + H2O = XDP + phosphate + H(+). It catalyses the reaction ITP + H2O = IDP + phosphate + H(+). In terms of biological role, phosphatase that hydrolyzes non-canonical purine nucleotides such as XTP and ITP to their respective diphosphate derivatives. Probably excludes non-canonical purines from DNA/RNA precursor pool, thus preventing their incorporation into DNA/RNA and avoiding chromosomal lesions. The sequence is that of Inosine/xanthosine triphosphatase from Shewanella sp. (strain MR-4).